A 131-amino-acid chain; its full sequence is Protein NrdI (131 aa).

It belongs to the NrdI family.

Functionally, probably involved in ribonucleotide reductase function. The protein is Protein NrdI of Bacillus licheniformis (strain ATCC 14580 / DSM 13 / JCM 2505 / CCUG 7422 / NBRC 12200 / NCIMB 9375 / NCTC 10341 / NRRL NRS-1264 / Gibson 46).